Consider the following 371-residue polypeptide: Cytochrome b (371 aa).

The next 4 membrane-spanning stretches (helical) occupy residues 25 to 45 (FGSMLLSCLFLQTTTGFFLAI), 69 to 90 (WIMQNTHAISASAFFICIYIHI), 105 to 125 (WLTGVALLTTLMATAFFGYVL), and 170 to 190 (FFALHFILPFLIISLSSIHII). 2 residues coordinate heme b: H75 and H89. Heme b-binding residues include H174 and H188. H193 serves as a coordination point for a ubiquinone. 4 consecutive transmembrane segments (helical) span residues 218 to 238 (YKDLLMFITLMTMLLLTLSFM), 280 to 300 (LGGALALTMSIIILTTAPFTH), 312 to 332 (LAQTLFWTLIATFITITWAAT), and 339 to 358 (FLLISQTTAILYFSFFIMNP).

It belongs to the cytochrome b family. The cytochrome bc1 complex contains 3 respiratory subunits (MT-CYB, CYC1 and UQCRFS1), 2 core proteins (UQCRC1 and UQCRC2) and probably 6 low-molecular weight proteins. The cofactor is heme b.

The protein resides in the mitochondrion inner membrane. Component of the ubiquinol-cytochrome c reductase complex (complex III or cytochrome b-c1 complex) that is part of the mitochondrial respiratory chain. The b-c1 complex mediates electron transfer from ubiquinol to cytochrome c. Contributes to the generation of a proton gradient across the mitochondrial membrane that is then used for ATP synthesis. The chain is Cytochrome b (MT-CYB) from Laticauda colubrina (Yellow-lipped sea krait).